The following is a 208-amino-acid chain: Small ribosomal subunit protein uS5 (208 aa).

A compositionally biased stretch (polar residues) spans 1–15 (MTDSNNQSPNKKTSG). The tract at residues 1–54 (MTDSNNQSPNKKTSGSSSAPPAADGRQENRRSRGEKRGGRRDRRGQERDSEWQE) is disordered. 2 stretches are compositionally biased toward basic and acidic residues: residues 25 to 37 (GRQE…GEKR) and 44 to 54 (RGQERDSEWQE). The 64-residue stretch at 52–115 (WQERVVQIRR…ADGKKHLVRV (64 aa)) folds into the S5 DRBM domain.

It belongs to the universal ribosomal protein uS5 family. Part of the 30S ribosomal subunit. Contacts proteins S4 and S8.

With S4 and S12 plays an important role in translational accuracy. Its function is as follows. Located at the back of the 30S subunit body where it stabilizes the conformation of the head with respect to the body. This Prochlorococcus marinus (strain NATL2A) protein is Small ribosomal subunit protein uS5.